The chain runs to 276 residues: MEDQPKDREAEVAGPWFSKWERQCLAEAEQAEQLSPELQEEAAADAAGLKIERQRLWHLFQISATAVAQLYKDSGCQQPGLSMWDPFQNAAMAVTSLYKESGDAYQRSFELGVQVGYQRRVRDVLEWVKKGRSIIRREDLISFLCGKVPPTPQPPRTPRMSPRPPAAASTQAAATESGTPVGVDLQPFHEAIALHGLSGAMASISMRSGPPGSSSQDGGIASSGRWKSSFLENDPNSLSSEELTLLLDSGGVRKRTSAQFGDGSADSPLHKRNRMV.

Disordered stretches follow at residues G146–G182, I204–L238, and V252–V276. Pro residues predominate over residues P149–P165. 2 stretches are compositionally biased toward low complexity: residues A166 to T179 and S208 to G219. The interval V252–V276 is nuclear localization signal.

The protein belongs to the HAPSTR1 family. In terms of assembly, homooligomer. Heterooligomer with HAPSTR1; the interaction is direct and stabilizes HAPSTR1 independently of HUWE1. Interacts with HUWE1.

It is found in the nucleus. Together with HAPSTR1 plays a central regulatory role in the cellular response to molecular stressors, such as DNA damage, nutrient scarcity, and protein misfolding. Regulates these multiple stress response signaling pathways by stabilizing HAPSTR1, but also independently of HAPSTR1. This chain is HUWE1-associated protein modifying stress responses 2, found in Mus musculus (Mouse).